Reading from the N-terminus, the 269-residue chain is 4-hydroxy-tetrahydrodipicolinate reductase (269 aa).

NAD(+) contacts are provided by residues 8–13 (GAAGRM) and E34. R35 provides a ligand contact to NADP(+). Residues 98-100 (GTT) and 122-125 (APNY) each bind NAD(+). H155 acts as the Proton donor/acceptor in catalysis. H156 contacts (S)-2,3,4,5-tetrahydrodipicolinate. K159 serves as the catalytic Proton donor. Residue 165-166 (GT) coordinates (S)-2,3,4,5-tetrahydrodipicolinate.

Belongs to the DapB family.

Its subcellular location is the cytoplasm. It catalyses the reaction (S)-2,3,4,5-tetrahydrodipicolinate + NAD(+) + H2O = (2S,4S)-4-hydroxy-2,3,4,5-tetrahydrodipicolinate + NADH + H(+). The enzyme catalyses (S)-2,3,4,5-tetrahydrodipicolinate + NADP(+) + H2O = (2S,4S)-4-hydroxy-2,3,4,5-tetrahydrodipicolinate + NADPH + H(+). The protein operates within amino-acid biosynthesis; L-lysine biosynthesis via DAP pathway; (S)-tetrahydrodipicolinate from L-aspartate: step 4/4. Catalyzes the conversion of 4-hydroxy-tetrahydrodipicolinate (HTPA) to tetrahydrodipicolinate. In Vibrio cholerae serotype O1 (strain ATCC 39315 / El Tor Inaba N16961), this protein is 4-hydroxy-tetrahydrodipicolinate reductase.